The primary structure comprises 351 residues: tRNA pseudouridine synthase D (351 aa).

Residue Asp81 is the Nucleophile of the active site. The 147-residue stretch at 158 to 304 (GVPNYFGSQR…MRHERRAIEL (147 aa)) folds into the TRUD domain.

Belongs to the pseudouridine synthase TruD family.

The enzyme catalyses uridine(13) in tRNA = pseudouridine(13) in tRNA. Its function is as follows. Responsible for synthesis of pseudouridine from uracil-13 in transfer RNAs. The protein is tRNA pseudouridine synthase D of Aliivibrio fischeri (strain MJ11) (Vibrio fischeri).